Consider the following 448-residue polypeptide: MTTILKHLPVGQRIGIAFSGGLDTSAALLWMRQKGAVPYAYTANLGQPDEEDYDAIPRRAMEYGAENARLIDCRKQLVAEGIAAIQCGAFHNTTGGLTYFNTTPLGRAVTGTMLVAAMKDDGVNIWGDGSTYKGNDIERFYRYGLLTNAELQIYKPWLDTDFIDELGGRQEMSEFMVASGFDYKMSAEKAYSTDSNMLGATHEAKDLEFLNSSVKIVNPIMGVKFWDENVKVQVEEVTVRFERGHPVALNGQTFSDDVELMLEANRIGGRHGLGMSDQIENRIIEAKSRGIYEAPGMALLHIAYERLLTGIHNEDTIEQYHSHGRQLGKLLYQGRWFDPQALMLRDALQRWVASAITGEVTLELRRGNDYSILNTVSDNLTYKAERLTMEKGDSVFSPDDRIGQLTMRNLDITDTREKLFNYIETGLLSASSGNGLPQVENLEHSDKK.

ATP-binding positions include 17–25 (AFSGGLDTS) and A43. Y99 provides a ligand contact to L-citrulline. Residues G129 and T131 each coordinate ATP. L-aspartate is bound by residues T131, N135, and D136. L-citrulline is bound at residue N135. ATP is bound at residue D136. Positions 139 and 192 each coordinate L-citrulline. An ATP-binding site is contributed by D194. L-citrulline-binding residues include T201, E203, and E280.

It belongs to the argininosuccinate synthase family. Type 2 subfamily. As to quaternary structure, homotetramer.

It localises to the cytoplasm. The enzyme catalyses L-citrulline + L-aspartate + ATP = 2-(N(omega)-L-arginino)succinate + AMP + diphosphate + H(+). It functions in the pathway amino-acid biosynthesis; L-arginine biosynthesis; L-arginine from L-ornithine and carbamoyl phosphate: step 2/3. This is Argininosuccinate synthase from Enterobacter sp. (strain 638).